A 277-amino-acid polypeptide reads, in one-letter code: Large ribosomal subunit protein uL2 (277 aa).

Disordered regions lie at residues 35–60 (EKQS…GHKQ) and 225–277 (MNPV…ANKR). Positions 43–53 (RNNNGHITTRH) are enriched in polar residues.

This sequence belongs to the universal ribosomal protein uL2 family. As to quaternary structure, part of the 50S ribosomal subunit. Forms a bridge to the 30S subunit in the 70S ribosome.

Functionally, one of the primary rRNA binding proteins. Required for association of the 30S and 50S subunits to form the 70S ribosome, for tRNA binding and peptide bond formation. It has been suggested to have peptidyltransferase activity; this is somewhat controversial. Makes several contacts with the 16S rRNA in the 70S ribosome. This chain is Large ribosomal subunit protein uL2, found in Methylobacillus flagellatus (strain ATCC 51484 / DSM 6875 / VKM B-1610 / KT).